The sequence spans 363 residues: Outer membrane porin C (363 aa).

The N-terminal stretch at 1 to 21 is a signal peptide; sequence MKVKVLSLLVPALLVAGAANA. Residues 174 to 187 show a composition bias toward polar residues; sequence NGSASGEDQTNNGR. Residues 174 to 195 form a disordered region; that stretch reads NGSASGEDQTNNGRTELRQNGD.

It belongs to the Gram-negative porin family. Homotrimer. Probably forms mixed heterotrimers with OmpF; other mixed heterotrimers are also probable.

It is found in the cell outer membrane. Forms pores that allow passive diffusion of small molecules across the outer membrane. In terms of biological role, (Microbial infection) Binds CdiA-EC536, probably acts as the outer membrane receptor for toxin CdiA-EC536 with OmpF. This is Outer membrane porin C (ompC) from Enterobacter cloacae subsp. cloacae (strain ATCC 13047 / DSM 30054 / NBRC 13535 / NCTC 10005 / WDCM 00083 / NCDC 279-56).